Reading from the N-terminus, the 555-residue chain is Solute carrier family 22 member 2 (555 aa).

Topologically, residues 1 to 22 (MPTTVDDVLEHGGEFHFFQKQM) are cytoplasmic. A helical membrane pass occupies residues 23–43 (FFLLALLSATFAPIYVGIVFL). Over 44 to 150 (GFTPDHRCRS…LVCANSWMLD (107 aa)) the chain is Extracellular. Asparagine 72 carries N-linked (GlcNAc...) asparagine glycosylation. A helical transmembrane segment spans residues 151–171 (LFQSSVNVGFFIGSMSIGYIA). Over 172-177 (DRFGRK) the chain is Cytoplasmic. Residues 178-198 (LCLLTTVLINAAAGVLMAISP) form a helical membrane-spanning segment. At 199–208 (TYTWMLIFRL) the chain is on the extracellular side. A helical transmembrane segment spans residues 209–229 (IQGLVSKAGWLIGYILITEFV). Topologically, residues 230 to 238 (GRRYRRTVG) are cytoplasmic. The helical transmembrane segment at 239–259 (IFYQVAYTVGLLVLAGVAYAL) threads the bilayer. At 260–263 (PHWR) the chain is on the extracellular side. Residues 264–284 (WLQFTVSLPNFFFLLYYWCIP) traverse the membrane as a helical segment. The Proline-rich sequence motif lies at 284–288 (PESPR). Topologically, residues 285 to 348 (ESPRWLISQN…VRTPQIRKHT (64 aa)) are cytoplasmic. The chain crosses the membrane as a helical span at residues 349 to 369 (MILMYNWFTSSVLYQGLIMHM). Topologically, residues 370–375 (GLAGDN) are extracellular. The chain crosses the membrane as a helical span at residues 376-396 (IYLDFFYSALVEFPAAFMIIL). Over 397-414 (TIDRIGRRYPWAASNMVA) the chain is Cytoplasmic. The chain crosses the membrane as a helical span at residues 415–435 (GAACLASVFIPGDLQWLKIII). The Extracellular portion of the chain corresponds to 436-441 (SCLGRM). A helical membrane pass occupies residues 442-462 (GITMAYEIVCLVNAELYPTFI). At 463-464 (RN) the chain is on the cytoplasmic side. The chain crosses the membrane as a helical span at residues 465 to 485 (LGVHICSSMCDIGGIITPFLV). Residues 486–494 (YRLTNIWLE) lie on the Extracellular side of the membrane. A helical transmembrane segment spans residues 495 to 515 (LPLMVFGVLGLVAGGLVLLLP). Over 516-555 (ETKGKALPETIEEAENMQRPRKNKEKMIYLQVQKLDIPLN) the chain is Cytoplasmic.

This sequence belongs to the major facilitator (TC 2.A.1) superfamily. Organic cation transporter (TC 2.A.1.19) family. In terms of processing, tyrosine phosphorylated by tyrosine-protein kinase YES1. In terms of tissue distribution, mainly expressed in kidney, in the cortex and medulla. Localized in testis, mostly to peritubular myoid cells and Leydig cells and also detected along the basal membrane of Sertoli cells. Expressed in brain, in neurons of the cerebral cortex and in various subcortical nuclei. In the brain, also detected in the dopaminergic regions of the substantia nigra. Expressed in tracheal and bronchial ciliated epithelium in the respiratory tract. Also detected in secretory phase endometrium, in scattered stromal cells. Expressed in spleen, placenta, small intestine and spinal cord. Weakly expressed in prostate, uterus and lung. Mainly expressed in kidney, bone marrow and testis. Expressed in colon, skeletal muscle, spinal cord, placenta and liver.

It is found in the basolateral cell membrane. The protein resides in the basal cell membrane. The protein localises to the apical cell membrane. The enzyme catalyses (R)-noradrenaline(out) = (R)-noradrenaline(in). It carries out the reaction (R)-adrenaline(out) = (R)-adrenaline(in). It catalyses the reaction serotonin(out) = serotonin(in). The catalysed reaction is dopamine(out) = dopamine(in). The enzyme catalyses histamine(out) = histamine(in). It carries out the reaction thiamine(in) = thiamine(out). It catalyses the reaction creatinine(in) = creatinine(out). The catalysed reaction is 1-methylnicotinamide(out) = 1-methylnicotinamide(in). The enzyme catalyses guanidine(out) = guanidine(in). It carries out the reaction choline(out) = choline(in). It catalyses the reaction agmatine(out) = agmatine(in). The catalysed reaction is putrescine(out) = putrescine(in). The enzyme catalyses spermidine(in) = spermidine(out). It carries out the reaction tyramine(in) = tyramine(out). It catalyses the reaction L-histidyl-L-proline diketopiperazine(in) = L-histidyl-L-proline diketopiperazine(out). The catalysed reaction is (R)-salsolinol(in) = (R)-salsolinol(out). The enzyme catalyses N-methyl-(R)-salsolinol(in) = N-methyl-(R)-salsolinol(out). It carries out the reaction acetylcholine(in) = acetylcholine(out). It catalyses the reaction prostaglandin F2alpha(out) = prostaglandin F2alpha(in). The catalysed reaction is prostaglandin E2(out) = prostaglandin E2(in). Tyrosine phosphorylation of the transporter leads to activation of the transport activity. TEA uptake is activated by tyrosine phosphorylation. Inhibited by cGMP, most likely through a cGMP-binding protein that interacts with OCT2. In terms of biological role, electrogenic voltage-dependent transporter that mediates the transport of a variety of organic cations such as endogenous bioactive amines, cationic drugs and xenobiotics. Functions as a Na(+)-independent, bidirectional uniporter. Cation cellular uptake or release is driven by the electrochemical potential, i.e. membrane potential and concentration gradient. However, may also engage electroneutral cation exchange when saturating concentrations of cation substrates are reached. Predominantly expressed at the basolateral membrane of hepatocytes and proximal tubules and involved in the uptake and disposition of cationic compounds by hepatic and renal clearance from the blood flow. Implicated in monoamine neurotransmitters uptake such as histamine, dopamine, adrenaline/epinephrine, noradrenaline/norepinephrine, serotonin and tyramine, thereby supporting a physiological role in the central nervous system by regulating interstitial concentrations of neurotransmitters. Also capable of transporting dopaminergic neuromodulators cyclo(his-pro), salsolinol and N-methyl-salsolinol, thereby involved in the maintenance of dopaminergic cell integrity in the central nervous system. Mediates the bidirectional transport of acetylcholine (ACh) at the apical membrane of ciliated cell in airway epithelium, thereby playing a role in luminal release of ACh from bronchial epithelium. Also transports guanidine and endogenous monoamines such as vitamin B1/thiamine, creatinine and N-1-methylnicotinamide (NMN). Mediates the uptake and efflux of quaternary ammonium compound choline. Mediates the bidirectional transport of polyamine agmatine and the uptake of polyamines putrescine and spermidine. Able to transport non-amine endogenous compounds such as prostaglandin E2 (PGE2) and prostaglandin F2-alpha (PGF2-alpha). Also involved in the uptake of xenobiotic 4-(4-(dimethylamino)styryl)-N-methylpyridinium (ASP). May contribute to regulate the transport of organic compounds in testis across the blood-testis-barrier. In contrast with isoform 1, not able to transport guanidine, creatinine, cimetidine and metformin. The protein is Solute carrier family 22 member 2 of Homo sapiens (Human).